A 732-amino-acid polypeptide reads, in one-letter code: MALLQRASYLRLYYLRLMGSRPRLFSSSLSPALHRHSSTLSSPPFSSPSPSFRLKFQLTSVLSQRLIQRNAISSRFLSTEASQETTTSKGYSSEQIQVLEGLDPVRKRPGMYIGSTGSRGLHHLVYEILDNAIDEAQAGYASKVDVVLHADGSVSVVDNGRGIPTDLHPATKKSSLETVLTVLHAGGKFGGTSSGYSVSGGLHGVGLSVVNALSEALEVSVWRDGMEHKQNYSRGKPITTLTCRVLPLESKGTKGTSIRFWPDKEVFTTAIEFDHNTIAGRIRELAFLNPKVTISLKKEDDDPEKTQYSEYSFAGGLTEYVSWLNTDKNPIHDVLGFRREINGATVDVALQWCSDAYSDTMLGYANSIRTIDGGTHIEGVKASLTRTLNTLAKKSKTVKEKDISLSGEHVREGLTCIVSVKVPNPEFEGQTKTRLGNPEVRKIVDQSVQEYLTEFLELHPDILESIISKSLNAYKAALAAKRARELVRSKSVLKSSSLPGKLADCSSTDPEVSEIFIVEGDSAGGSAKQGRDRRFQAILPLRGKILNIERKDEAAMYKNEEIQNLILGLGLGVKGEDFKKENLRYHKIIILTDADVDGAHIRTLLLTFFFRYQRALFDAGCIYVGVPPLFKVERGKNAQYCYDDADLKKITSNFPANASYNIQRFKGLGEMMPEQLWETTMNPETRILKQLVVDDIAEANMTFSSLMGARVDVRKELIKNAATRINLQRLDI.

A Toprim domain is found at 513–620; it reads SEIFIVEGDS…RYQRALFDAG (108 aa). Positions 519, 593, and 595 each coordinate Mg(2+).

It belongs to the type II topoisomerase GyrB family. As to quaternary structure, made up of two chains. The A chain is responsible for DNA breakage and rejoining; the B chain catalyzes ATP hydrolysis. Mg(2+) serves as cofactor. Mn(2+) is required as a cofactor. Requires Ca(2+) as cofactor.

It localises to the mitochondrion. It catalyses the reaction ATP-dependent breakage, passage and rejoining of double-stranded DNA.. A type II topoisomerase that negatively supercoils closed circular double-stranded DNA in an ATP-dependent manner. This is DNA gyrase subunit B, mitochondrial (GYRBM) from Arabidopsis thaliana (Mouse-ear cress).